The primary structure comprises 62 residues: U10-buthitoxin-Hj1a (62 aa).

The first 22 residues, 1–22 (MQKIFIILVLFCILKFNVDVEG), serve as a signal peptide directing secretion. 3 disulfides stabilise this stretch: C28–C46, C33–C59, and C37–C61.

This sequence belongs to the short scorpion toxin superfamily. Potassium channel inhibitor family. Alpha-KTx 23 subfamily. Expressed by the venom gland.

Its subcellular location is the secreted. May block potassium channels. The polypeptide is U10-buthitoxin-Hj1a (Hottentotta judaicus (Black scorpion)).